The chain runs to 89 residues: Long neurotoxin 1 (89 aa).

The first 21 residues, 1 to 21, serve as a signal peptide directing secretion; the sequence is MKTLLLTLVVVTIVCLDLGDS. 4 cysteine pairs are disulfide-bonded: Cys-24–Cys-41, Cys-34–Cys-58, Cys-62–Cys-74, and Cys-75–Cys-80.

The protein belongs to the three-finger toxin family. Long-chain subfamily. Type II alpha-neurotoxin sub-subfamily. Expressed by the venom gland.

It localises to the secreted. Functionally, binds with high affinity to muscular (alpha-1/CHRNA1) and neuronal (alpha-7/CHRNA7) nicotinic acetylcholine receptor (nAChR) and inhibits acetylcholine from binding to the receptor, thereby impairing neuromuscular and neuronal transmission. This chain is Long neurotoxin 1, found in Pseudonaja textilis (Eastern brown snake).